The chain runs to 117 residues: Small ribosomal subunit protein uS17 (117 aa).

The tract at residues 1-42 is disordered; the sequence is MMAEAKKAAPKKAATAASKDADAKGPKHTPPNPKVRGRRKTR.

The protein belongs to the universal ribosomal protein uS17 family. Part of the 30S ribosomal subunit.

In terms of biological role, one of the primary rRNA binding proteins, it binds specifically to the 5'-end of 16S ribosomal RNA. This is Small ribosomal subunit protein uS17 from Mycolicibacterium paratuberculosis (strain ATCC BAA-968 / K-10) (Mycobacterium paratuberculosis).